Consider the following 660-residue polypeptide: UvrABC system protein C (660 aa).

Residues 16–95 enclose the GIY-YIG domain; sequence ESPGVYRFRD…IKQYDPRFNV (80 aa). The UVR domain occupies 208 to 243; that stretch reads DAMVRRLEREMAEASAELEFERAARLRDDLAALRRA. A disordered region spans residues 469-501; the sequence is GEAGVESAGDPDAPAGPDAPDEPRVGTLVDPTT. Residues 476–486 show a composition bias toward low complexity; sequence AGDPDAPAGPD.

Belongs to the UvrC family. As to quaternary structure, interacts with UvrB in an incision complex.

The protein localises to the cytoplasm. Its function is as follows. The UvrABC repair system catalyzes the recognition and processing of DNA lesions. UvrC both incises the 5' and 3' sides of the lesion. The N-terminal half is responsible for the 3' incision and the C-terminal half is responsible for the 5' incision. The polypeptide is UvrABC system protein C (Salinispora arenicola (strain CNS-205)).